The following is a 371-amino-acid chain: Glutamate 5-kinase (371 aa).

Lysine 14 is a binding site for ATP. Residues serine 52, aspartate 139, and asparagine 151 each contribute to the substrate site. 171-172 contacts ATP; it reads SD. Residues 275–353 form the PUA domain; sequence EGRLHLDSGA…ADLAMELGPS (79 aa).

This sequence belongs to the glutamate 5-kinase family.

It localises to the cytoplasm. The enzyme catalyses L-glutamate + ATP = L-glutamyl 5-phosphate + ADP. It participates in amino-acid biosynthesis; L-proline biosynthesis; L-glutamate 5-semialdehyde from L-glutamate: step 1/2. Catalyzes the transfer of a phosphate group to glutamate to form L-glutamate 5-phosphate. In Frankia casuarinae (strain DSM 45818 / CECT 9043 / HFP020203 / CcI3), this protein is Glutamate 5-kinase.